Reading from the N-terminus, the 291-residue chain is uncharacterized protein (291 aa).

The next 2 helical transmembrane spans lie at Ile42–Trp62 and Thr86–Asp106.

Belongs to the cytochrome c oxidase subunit 2 family.

The protein resides in the mitochondrion membrane. This is an uncharacterized protein from Arabidopsis thaliana (Mouse-ear cress).